Reading from the N-terminus, the 564-residue chain is Formate--tetrahydrofolate ligase (564 aa).

Thr65 to Thr72 contacts ATP.

Belongs to the formate--tetrahydrofolate ligase family.

It catalyses the reaction (6S)-5,6,7,8-tetrahydrofolate + formate + ATP = (6R)-10-formyltetrahydrofolate + ADP + phosphate. Its pathway is one-carbon metabolism; tetrahydrofolate interconversion. The protein is Formate--tetrahydrofolate ligase of Roseiflexus castenholzii (strain DSM 13941 / HLO8).